We begin with the raw amino-acid sequence, 211 residues long: Thymidylate kinase (211 aa).

11–18 contributes to the ATP binding site; that stretch reads GPDGAGKT.

Belongs to the thymidylate kinase family.

It carries out the reaction dTMP + ATP = dTDP + ADP. In terms of biological role, phosphorylation of dTMP to form dTDP in both de novo and salvage pathways of dTTP synthesis. The sequence is that of Thymidylate kinase from Streptococcus equi subsp. zooepidemicus (strain H70).